The primary structure comprises 608 residues: Membrane protein insertase YidC (608 aa).

Residues 8–28 (LLLATALSFLVILGWYFFFPP) form a helical membrane-spanning segment. The disordered stretch occupies residues 33–61 (PQPATEVTETAPQGDTTAPAAAPSAGAAT). 5 consecutive transmembrane segments (helical) span residues 378–398 (MGVAIIALTFLLKILVFPLAY), 448–468 (LPILIQIPIFFSLYKVIFVTL), 482–502 (LSVPDPTSLFNLFGLLPWAAP), 506–526 (SLLSLVFIGILPILLGVSMWV), and 542–562 (IFAWMPWVFMFMLGGFASGLV).

It belongs to the OXA1/ALB3/YidC family. Type 1 subfamily. Interacts with the Sec translocase complex via SecD. Specifically interacts with transmembrane segments of nascent integral membrane proteins during membrane integration.

The protein localises to the cell inner membrane. In terms of biological role, required for the insertion and/or proper folding and/or complex formation of integral membrane proteins into the membrane. Involved in integration of membrane proteins that insert both dependently and independently of the Sec translocase complex, as well as at least some lipoproteins. Aids folding of multispanning membrane proteins. This is Membrane protein insertase YidC from Ruegeria sp. (strain TM1040) (Silicibacter sp.).